The following is a 144-amino-acid chain: uncharacterized protein (144 aa).

Residues 13 to 120 (IFCGIVEGNV…VPKYETGLGF (108 aa)) enclose the HIT domain. Positions 105 to 109 (HYHMH) match the Histidine triad motif motif.

This is an uncharacterized protein from Mycoplasma pneumoniae (strain ATCC 29342 / M129 / Subtype 1) (Mycoplasmoides pneumoniae).